The primary structure comprises 368 residues: Ribosomal RNA large subunit methyltransferase M (368 aa).

Residues Ser-192, 225-228 (APGG), Asp-244, Asp-264, and Asp-281 contribute to the S-adenosyl-L-methionine site. The Proton acceptor role is filled by Lys-310.

It belongs to the class I-like SAM-binding methyltransferase superfamily. RNA methyltransferase RlmE family. RlmM subfamily. In terms of assembly, monomer.

It is found in the cytoplasm. It carries out the reaction cytidine(2498) in 23S rRNA + S-adenosyl-L-methionine = 2'-O-methylcytidine(2498) in 23S rRNA + S-adenosyl-L-homocysteine + H(+). Catalyzes the 2'-O-methylation at nucleotide C2498 in 23S rRNA. The chain is Ribosomal RNA large subunit methyltransferase M from Colwellia psychrerythraea (strain 34H / ATCC BAA-681) (Vibrio psychroerythus).